A 130-amino-acid polypeptide reads, in one-letter code: Small ribosomal subunit protein uS4 (130 aa).

Residue Lys-64 is modified to N6-acetyllysine. A Glycyl lysine isopeptide (Lys-Gly) (interchain with G-Cter in SUMO2) cross-link involves residue Lys-91. Positions 106 to 130 constitute an S4 RNA-binding domain; that stretch reads RRLQTQVFKLGLAXSIHHXRVLIRQ. Lys-114 bears the N6-acetyllysine mark.

Belongs to the universal ribosomal protein uS4 family. In terms of assembly, component of the small ribosomal subunit. Identified in a IGF2BP1-dependent mRNP granule complex containing untranslated mRNAs. Part of the small subunit (SSU) processome, composed of more than 70 proteins and the RNA chaperone small nucleolar RNA (snoRNA) U3.

The protein localises to the cytoplasm. It is found in the nucleus. The protein resides in the nucleolus. Its function is as follows. Component of the small ribosomal subunit. The ribosome is a large ribonucleoprotein complex responsible for the synthesis of proteins in the cell. Part of the small subunit (SSU) processome, first precursor of the small eukaryotic ribosomal subunit. During the assembly of the SSU processome in the nucleolus, many ribosome biogenesis factors, an RNA chaperone and ribosomal proteins associate with the nascent pre-rRNA and work in concert to generate RNA folding, modifications, rearrangements and cleavage as well as targeted degradation of pre-ribosomal RNA by the RNA exosome. The chain is Small ribosomal subunit protein uS4 (RPS9) from Sus scrofa (Pig).